A 210-amino-acid chain; its full sequence is Large ribosomal subunit protein uL4 (210 aa).

In terms of assembly, part of the 50S ribosomal subunit. In terms of processing, the N-terminus is blocked.

Its function is as follows. One of the primary rRNA binding proteins, this protein initially binds near the 5'-end of the 23S rRNA. It is important during the early stages of 50S assembly. It makes multiple contacts with different domains of the 23S rRNA in the assembled 50S subunit and ribosome. In terms of biological role, forms part of the polypeptide exit tunnel. This protein can be incorporated into E.coli ribosomes in vivo, which resulted in decreased peptidyltransferase (Ptase) activity of the hybrid ribosomes. The hybrid 50S subunits associate less well with 30S subunits to form the ribosome. This chain is Large ribosomal subunit protein uL4 (rplD), found in Thermus thermophilus (strain ATCC 27634 / DSM 579 / HB8).